A 620-amino-acid polypeptide reads, in one-letter code: MDSHTLVQALIYLGSAALIVPIAVRLGLGSVLGYLIAGCIIGPWGLRLVTDAESILHFAEIGVVLMLFIIGLELDPQRLWKLRAAVFGGGALQMVICGGLLGLFCMLLGLRWQVAELIGMTLALSSTAIAMQAMNERNLMVTQMGRSAFAVLLFQDIAAIPLVAMIPLLAASSASTTMGAFALSALKVAGALVLVVLLGRYVTRPALRFVARSGLREVFSAVALFLVFGFGLLLEEVGLSMAMGAFLAGVLLASSEYRHALESDIEPFKGLLLGLFFIGVGMSIDFGTLIENPLRIVILLLGFLIIKIAMLWLIARPLQVPNKQRRWFAVLLGQGSEFAFVVFGAAQMANVLEPEWAKSLTLAVALSMAATPILLVILNRLEQSSTEEAREADEIDEEQPRVIIAGFGRFGQITGRLLLSSGVKMVVLDHDPDHIETLRKFGMKVFYGDATRMDLLESAGAAKAEVLINAIDDPQTNLQLTEMVKEHFPHLQIIARARDVDHYICLRQAGVEKPERETFEGALKTGRLALESLGLGPYEARERADVFRRFNIQMVEEMAMVENDTKARAAVYKRTSAMLSEIITEDREHLSLIQRHGWQGTEEGKHTGNMADEPETKPSS.

Residues 1–3 (MDS) are Periplasmic-facing. A helical transmembrane segment spans residues 4-24 (HTLVQALIYLGSAALIVPIAV). Residue R25 is a topological domain, cytoplasmic. The helical transmembrane segment at 26-46 (LGLGSVLGYLIAGCIIGPWGL) threads the bilayer. Over 47–53 (RLVTDAE) the chain is Periplasmic. Residues 54 to 74 (SILHFAEIGVVLMLFIIGLEL) traverse the membrane as a helical segment. Topologically, residues 75–89 (DPQRLWKLRAAVFGG) are cytoplasmic. Residues 90–110 (GALQMVICGGLLGLFCMLLGL) form a helical membrane-spanning segment. At 111–113 (RWQ) the chain is on the periplasmic side. A helical transmembrane segment spans residues 114-134 (VAELIGMTLALSSTAIAMQAM). Topologically, residues 135-148 (NERNLMVTQMGRSA) are cytoplasmic. Residues 149–169 (FAVLLFQDIAAIPLVAMIPLL) traverse the membrane as a helical segment. Topologically, residues 170–177 (AASSASTT) are periplasmic. The chain crosses the membrane as a helical span at residues 178–198 (MGAFALSALKVAGALVLVVLL). At 199 to 213 (GRYVTRPALRFVARS) the chain is on the cytoplasmic side. The helical transmembrane segment at 214 to 233 (GLREVFSAVALFLVFGFGLL) threads the bilayer. At 234-236 (LEE) the chain is on the periplasmic side. Residues 237 to 254 (VGLSMAMGAFLAGVLLAS) form a helical membrane-spanning segment. Residues 255-269 (SEYRHALESDIEPFK) are Cytoplasmic-facing. Residues 270 to 290 (GLLLGLFFIGVGMSIDFGTLI) traverse the membrane as a helical segment. Residues 291–293 (ENP) lie on the Periplasmic side of the membrane. Residues 294–314 (LRIVILLLGFLIIKIAMLWLI) form a helical membrane-spanning segment. Over 315-326 (ARPLQVPNKQRR) the chain is Cytoplasmic. Residues 327–347 (WFAVLLGQGSEFAFVVFGAAQ) traverse the membrane as a helical segment. The Periplasmic portion of the chain corresponds to 348–358 (MANVLEPEWAK). Residues 359-379 (SLTLAVALSMAATPILLVILN) traverse the membrane as a helical segment. The Cytoplasmic segment spans residues 380–620 (RLEQSSTEEA…ADEPETKPSS (241 aa)). Residues 399–518 (QPRVIIAGFG…AGVEKPERET (120 aa)) form the RCK N-terminal domain. The disordered stretch occupies residues 597 to 620 (GWQGTEEGKHTGNMADEPETKPSS).

Belongs to the monovalent cation:proton antiporter 2 (CPA2) transporter (TC 2.A.37) family. KefC subfamily. In terms of assembly, homodimer. Interacts with the regulatory subunit KefF.

It localises to the cell inner membrane. In terms of biological role, pore-forming subunit of a potassium efflux system that confers protection against electrophiles. Catalyzes K(+)/H(+) antiport. The protein is Glutathione-regulated potassium-efflux system protein KefC of Escherichia coli O157:H7.